Consider the following 269-residue polypeptide: Thymidylate synthase (269 aa).

Arginine 21 is a dUMP binding site. Histidine 51 contacts (6R)-5,10-methylene-5,6,7,8-tetrahydrofolate. 126 to 127 (RR) contacts dUMP. Catalysis depends on cysteine 146, which acts as the Nucleophile. DUMP-binding positions include 171-174 (RSGD), asparagine 182, and 212-214 (HLY). Aspartate 174 lines the (6R)-5,10-methylene-5,6,7,8-tetrahydrofolate pocket. Residue alanine 268 participates in (6R)-5,10-methylene-5,6,7,8-tetrahydrofolate binding.

It belongs to the thymidylate synthase family. Bacterial-type ThyA subfamily. Homodimer.

Its subcellular location is the cytoplasm. The catalysed reaction is dUMP + (6R)-5,10-methylene-5,6,7,8-tetrahydrofolate = 7,8-dihydrofolate + dTMP. The protein operates within pyrimidine metabolism; dTTP biosynthesis. In terms of biological role, catalyzes the reductive methylation of 2'-deoxyuridine-5'-monophosphate (dUMP) to 2'-deoxythymidine-5'-monophosphate (dTMP) while utilizing 5,10-methylenetetrahydrofolate (mTHF) as the methyl donor and reductant in the reaction, yielding dihydrofolate (DHF) as a by-product. This enzymatic reaction provides an intracellular de novo source of dTMP, an essential precursor for DNA biosynthesis. This is Thymidylate synthase from Methylocella silvestris (strain DSM 15510 / CIP 108128 / LMG 27833 / NCIMB 13906 / BL2).